Here is a 266-residue protein sequence, read N- to C-terminus: Imidazole glycerol phosphate synthase subunit HisF (266 aa).

Residues D11 and D130 contribute to the active site.

The protein belongs to the HisA/HisF family. As to quaternary structure, heterodimer of HisH and HisF.

It localises to the cytoplasm. The catalysed reaction is 5-[(5-phospho-1-deoxy-D-ribulos-1-ylimino)methylamino]-1-(5-phospho-beta-D-ribosyl)imidazole-4-carboxamide + L-glutamine = D-erythro-1-(imidazol-4-yl)glycerol 3-phosphate + 5-amino-1-(5-phospho-beta-D-ribosyl)imidazole-4-carboxamide + L-glutamate + H(+). Its pathway is amino-acid biosynthesis; L-histidine biosynthesis; L-histidine from 5-phospho-alpha-D-ribose 1-diphosphate: step 5/9. Functionally, IGPS catalyzes the conversion of PRFAR and glutamine to IGP, AICAR and glutamate. The HisF subunit catalyzes the cyclization activity that produces IGP and AICAR from PRFAR using the ammonia provided by the HisH subunit. This Albidiferax ferrireducens (strain ATCC BAA-621 / DSM 15236 / T118) (Rhodoferax ferrireducens) protein is Imidazole glycerol phosphate synthase subunit HisF.